The chain runs to 295 residues: Proline-rich protein 18 (295 aa).

Positions 1-13 (MPFPPMPPPPAPA) are enriched in pro residues. The tract at residues 1–133 (MPFPPMPPPP…GAGPCPDSAA (133 aa)) is disordered. Over residues 14–29 (PGAQAARQLPRRPCAA) the composition is skewed to low complexity. At S47 the chain carries Phosphoserine. R83 carries the omega-N-methylarginine modification. Residues 103–126 (ARTTYAATSAGTGTTAAGTSSGAG) show a composition bias toward low complexity. Asymmetric dimethylarginine is present on R172. Residues 181–192 (ARAAGPRRGGPA) are compositionally biased toward low complexity. Positions 181–227 (ARAAGPRRGGPASDPDAPPTAGQGRRAPPPGAQLLHGGLQVPQLSPR) are disordered. R188 bears the Omega-N-methylarginine mark.

This Homo sapiens (Human) protein is Proline-rich protein 18 (PRR18).